We begin with the raw amino-acid sequence, 142 residues long: Hemoglobin subunit alpha-3 (142 aa).

One can recognise a Globin domain in the interval 2–142; it reads VLSAADKSNV…VSTVLTSKYR (141 aa). Histidine 59 contacts O2. Histidine 88 contacts heme b.

This sequence belongs to the globin family. As to quaternary structure, heterotetramer of two alpha chains and two beta chains. Red blood cells.

Functionally, involved in oxygen transport from the lung to the various peripheral tissues. The polypeptide is Hemoglobin subunit alpha-3 (Bubalus bubalis (Domestic water buffalo)).